The primary structure comprises 287 residues: Shikimate dehydrogenase (NADP(+)) (287 aa).

Shikimate-binding positions include 20–22 (SRS) and threonine 67. The active-site Proton acceptor is the lysine 71. Glutamate 84 provides a ligand contact to NADP(+). Shikimate contacts are provided by asparagine 93 and aspartate 108. Residues 132-136 (GAGGA), 156-161 (NRTAAR), and methionine 226 each bind NADP(+). Tyrosine 228 serves as a coordination point for shikimate. Glycine 250 contributes to the NADP(+) binding site.

Belongs to the shikimate dehydrogenase family. In terms of assembly, homodimer.

The enzyme catalyses shikimate + NADP(+) = 3-dehydroshikimate + NADPH + H(+). It participates in metabolic intermediate biosynthesis; chorismate biosynthesis; chorismate from D-erythrose 4-phosphate and phosphoenolpyruvate: step 4/7. Involved in the biosynthesis of the chorismate, which leads to the biosynthesis of aromatic amino acids. Catalyzes the reversible NADPH linked reduction of 3-dehydroshikimate (DHSA) to yield shikimate (SA). In Bordetella pertussis (strain Tohama I / ATCC BAA-589 / NCTC 13251), this protein is Shikimate dehydrogenase (NADP(+)).